The sequence spans 477 residues: Ribulose bisphosphate carboxylase large chain (477 aa).

A propeptide spanning residues 1–2 (MS) is cleaved from the precursor. Pro3 is subject to N-acetylproline. The residue at position 14 (Lys14) is an N6,N6,N6-trimethyllysine. Substrate is bound by residues Asn123 and Thr173. Catalysis depends on Lys175, which acts as the Proton acceptor. Residue Lys177 participates in substrate binding. Lys201, Asp203, and Glu204 together coordinate Mg(2+). Lys201 carries the N6-carboxylysine modification. Residue His294 is the Proton acceptor of the active site. The substrate site is built by Arg295, His327, and Ser379.

It belongs to the RuBisCO large chain family. Type I subfamily. As to quaternary structure, heterohexadecamer of 8 large chains and 8 small chains; disulfide-linked. The disulfide link is formed within the large subunit homodimers. Mg(2+) serves as cofactor. The disulfide bond which can form in the large chain dimeric partners within the hexadecamer appears to be associated with oxidative stress and protein turnover.

Its subcellular location is the plastid. It localises to the chloroplast. The enzyme catalyses 2 (2R)-3-phosphoglycerate + 2 H(+) = D-ribulose 1,5-bisphosphate + CO2 + H2O. It carries out the reaction D-ribulose 1,5-bisphosphate + O2 = 2-phosphoglycolate + (2R)-3-phosphoglycerate + 2 H(+). RuBisCO catalyzes two reactions: the carboxylation of D-ribulose 1,5-bisphosphate, the primary event in carbon dioxide fixation, as well as the oxidative fragmentation of the pentose substrate in the photorespiration process. Both reactions occur simultaneously and in competition at the same active site. This chain is Ribulose bisphosphate carboxylase large chain, found in Nicotiana tomentosiformis (Tobacco).